A 1166-amino-acid chain; its full sequence is Zinc finger CCHC domain-containing protein 2 (1166 aa).

4 disordered regions span residues 1–85, 205–240, 550–668, and 904–982; these read MLRM…GGHA, RAEGSRGSVEDEPSGDGEQDAEKDGPGPEGSGCAKL, SSAD…ARFS, and PASF…ISAV. Residues 43-64 show a composition bias toward pro residues; that stretch reads PPPPPTGLPRGPPPPPSPPRGL. Residues 65 to 76 show a composition bias toward low complexity; it reads EPPVASGPTAGA. Residues 214-223 show a composition bias toward acidic residues; that stretch reads EDEPSGDGEQ. Over residues 572 to 587 the composition is skewed to basic and acidic residues; it reads PQVEKEKVKKTEDRLN. A compositionally biased stretch (low complexity) spans 624-633; sequence SSESYSSPSS. Residues 634 to 653 are compositionally biased toward basic and acidic residues; it reads PRHDGRESLESEEEKDRDSD. The segment covering 919 to 947 has biased composition (polar residues); sequence LPTQNSSALNAATSAQPASTGISPSQSTV. Positions 949-963 are enriched in pro residues; that stretch reads PAVPTHTPGPAPSPS. Polar residues predominate over residues 964-982; it reads PALTHSTAQSDSTSYISAV. Residues 1119–1136 form a CCHC-type zinc finger; that stretch reads VSCYNCGVSGHYAQDCKQ.

The protein is Zinc finger CCHC domain-containing protein 2 (Zcchc2) of Mus musculus (Mouse).